A 477-amino-acid polypeptide reads, in one-letter code: Methionine aminopeptidase 2 (477 aa).

Residues 1–121 (MAGVEEAASC…TDPPSVPICD (121 aa)) form a disordered region. Ala-2 is modified (N-acetylalanine). Basic residues predominate over residues 36 to 46 (KKKKRKKKKSK). Residue Ser-45 is modified to Phosphoserine. The span at 54-78 (EPDKEAGASVDEVTRQLERQALEEK) shows a compositional bias: basic and acidic residues. The residue at position 62 (Ser-62) is a Phosphoserine; alternate. The O-linked (GlcNAc) serine; alternate glycan is linked to Ser-62. Residues 79–91 (EKDDDDEDGDGDG) are compositionally biased toward acidic residues. The span at 96 to 108 (GKKKKKKKKKRGP) shows a compositional bias: basic residues. A substrate-binding site is contributed by His-230. Residues Asp-250, Asp-261, and His-330 each coordinate a divalent metal cation. His-338 provides a ligand contact to substrate. Residues Glu-363 and Glu-458 each contribute to the a divalent metal cation site.

The protein belongs to the peptidase M24A family. Methionine aminopeptidase eukaryotic type 2 subfamily. In terms of assembly, binds EIF2S1 at low magnesium concentrations. Interacts strongly with the eIF-2 gamma-subunit EIF2S3. Requires Co(2+) as cofactor. The cofactor is Zn(2+). Mn(2+) is required as a cofactor. Fe(2+) serves as cofactor. In terms of processing, contains approximately 12 O-linked N-acetylglucosamine (GlcNAc) residues. O-glycosylation is required for EIF2S1 binding.

Its subcellular location is the cytoplasm. The catalysed reaction is Release of N-terminal amino acids, preferentially methionine, from peptides and arylamides.. Functionally, cotranslationally removes the N-terminal methionine from nascent proteins. The N-terminal methionine is often cleaved when the second residue in the primary sequence is small and uncharged (Met-Ala-, Cys, Gly, Pro, Ser, Thr, or Val). Its function is as follows. Protects eukaryotic initiation factor EIF2S1 from translation-inhibiting phosphorylation by inhibitory kinases such as EIF2AK2/PKR and EIF2AK1/HCR. Plays a critical role in the regulation of protein synthesis. The polypeptide is Methionine aminopeptidase 2 (Bos taurus (Bovine)).